The following is a 316-amino-acid chain: Geminin coiled-coil domain-containing protein 1 (316 aa).

A coiled-coil region spans residues 82–117 (QISANKQLQDTLLQKEEELSRLHEENNKLKEFLNSA). Composition is skewed to polar residues over residues 134–155 (GQSS…STPG) and 207–234 (MSLQ…QAAT). Disordered stretches follow at residues 134–160 (GQSS…KAKR) and 207–269 (MSLQ…DVAP). Phosphothreonine; by cdk2 is present on Thr-153. The segment covering 235 to 252 (SCSLSPSQCSSASLPESE) has biased composition (low complexity). The segment covering 253 to 262 (TASPLSSPTY) has biased composition (polar residues).

Belongs to the GEMC1 family. As to quaternary structure, interacts with topbp1. Interacts with Cdc45l and the kinase cdk2-cyclin-E (the interaction is direct). In terms of processing, highly phosphorylated by cdk2; stimulates initiation of DNA replication. As to expression, expressed in most tissues. Enriched in proliferating cells from skin and gut.

The protein resides in the nucleus. Functionally, regulator of DNA replication. Promotes initiation of chromosomal DNA replication by mediating topbp1- and cdk2-dependent recruitment of cdc45l onto replication origins. The protein is Geminin coiled-coil domain-containing protein 1 (gmnc) of Xenopus laevis (African clawed frog).